The primary structure comprises 440 residues: Proline--tRNA ligase (440 aa).

This sequence belongs to the class-II aminoacyl-tRNA synthetase family. ProS type 2 subfamily. As to quaternary structure, homodimer.

The protein localises to the cytoplasm. It catalyses the reaction tRNA(Pro) + L-proline + ATP = L-prolyl-tRNA(Pro) + AMP + diphosphate. Functionally, catalyzes the attachment of proline to tRNA(Pro) in a two-step reaction: proline is first activated by ATP to form Pro-AMP and then transferred to the acceptor end of tRNA(Pro). The polypeptide is Proline--tRNA ligase (Methylocella silvestris (strain DSM 15510 / CIP 108128 / LMG 27833 / NCIMB 13906 / BL2)).